Consider the following 447-residue polypeptide: MKDLISIINVKDHVGETVKIGAWVADKSGKGKLQFLQLRDGTAFFQAVVFKPNMIEKFGEEEGTAKFDEIKHLSQETSVYVTGVVKEDSRSKFGYELDVTELEVIGHSHDYPITPKEHGVEFLLDNRHLWLRSKRQMAMMQVRNAIIYASYDFFAKNGFIKFDSPILSGNAAENTTELFETDYFGNSAFLSQSGQLYLEAGAMALGRVFDFGPVFRAEKSKTRRHLTEFWMMDAEYPFVTHDESLDIQEAYVKALIQGVLDNAAYALETLERDTSMLQKYIDTPFKRVSYDDAIDLLQAHENDDDTDYEHVEHGDDFGSPHETWISNYYGVPTFIVNYPASFKAFYMKPVPGNPERVLCADLLAPEGYGEIIGGSERETDYDLLLKKIADFGLDPKDYDWYLELRKFGSVPHAGFGLGLERMVTFVAGTEHIREAIPFPRMINRIQP.

Belongs to the class-II aminoacyl-tRNA synthetase family. Homodimer.

Its subcellular location is the cytoplasm. It catalyses the reaction tRNA(Asn) + L-asparagine + ATP = L-asparaginyl-tRNA(Asn) + AMP + diphosphate + H(+). This chain is Asparagine--tRNA ligase, found in Lactococcus lactis subsp. cremoris (strain SK11).